Consider the following 153-residue polypeptide: Superoxide dismutase [Cu-Zn] (153 aa).

Cu cation-binding residues include His46, His48, and His63. A disulfide bond links Cys57 and Cys146. The tract at residues Gly61–His80 is disordered. Residues His63, His71, His80, and Asp83 each coordinate Zn(2+). The span at Gly68 to His80 shows a compositional bias: basic and acidic residues. His120 lines the Cu cation pocket. The segment covering Asp124 to Lys136 has biased composition (basic and acidic residues). The disordered stretch occupies residues Asp124–Arg143. Substrate is bound at residue Arg143.

The protein belongs to the Cu-Zn superoxide dismutase family. Homodimer. Cu cation serves as cofactor. It depends on Zn(2+) as a cofactor.

The protein resides in the cytoplasm. It carries out the reaction 2 superoxide + 2 H(+) = H2O2 + O2. Destroys radicals which are normally produced within the cells and which are toxic to biological systems. This chain is Superoxide dismutase [Cu-Zn] (sodC), found in Aspergillus flavus.